The chain runs to 154 residues: UPF0756 membrane protein CKR_1028 (154 aa).

Transmembrane regions (helical) follow at residues 5 to 25 (IILIIILTASVLGRANSVALA), 48 to 68 (NGLFLGLVILIASILIPIADG), 82 to 102 (WLGIFALLVSLFTTYLSGLGM), and 113 to 133 (IMPALILGAVIAAAFLGGVPV).

This sequence belongs to the UPF0756 family.

The protein localises to the cell membrane. This Clostridium kluyveri (strain NBRC 12016) protein is UPF0756 membrane protein CKR_1028.